A 197-amino-acid polypeptide reads, in one-letter code: GCN5-related N-acetyltransferase 1, chloroplastic (197 aa).

Residues 1 to 37 (MFLGGTISTPPASLRLRSTLNPQNAVTQSSSQATFPA) constitute a chloroplast transit peptide. A compositionally biased stretch (polar residues) spans 23–34 (QNAVTQSSSQAT). Residues 23–46 (QNAVTQSSSQATFPAAMQRKPPSY) form a disordered region. The N-acetyltransferase domain maps to 58 to 195 (FLLRRTTEGL…GMVFIRKQRN (138 aa)). Residues 129-131 (VVV), 137-142 (SCGLGK), 165-167 (EPR), and Tyr-172 contribute to the acetyl-CoA site. Tyr-172 (proton donor) is an active-site residue.

Belongs to the acetyltransferase family. GNAT subfamily. As to quaternary structure, oligomer. In terms of processing, autoacetylated. In terms of tissue distribution, expressed in green tissues. Accumulates mainly in flowers and young leaves, and, to a lower extent, in stems and mature leaves, but barely in roots.

The protein localises to the plastid. Its subcellular location is the chloroplast. It catalyses the reaction an N-terminal L-alpha-aminoacyl-[protein] + acetyl-CoA = N-terminal N(alpha)-acetyl-L-alpha-aminoacyl-[protein] + CoA + H(+). It carries out the reaction L-lysyl-[protein] + acetyl-CoA = N(6)-acetyl-L-lysyl-[protein] + CoA + H(+). The enzyme catalyses 5-methoxytryptamine + acetyl-CoA = melatonin + CoA + H(+). The catalysed reaction is serotonin + acetyl-CoA = N-acetylserotonin + CoA + H(+). Its activity is regulated as follows. Inhibited by 5-methoxytryptamine in vitro. In terms of biological role, protein acetyltransferase with dual specificity triggering both N-alpha-acetylation (NTA) and epsilon-lysine acetylation (KA), possibly with a low efficiency or toward specific plastid substrates. Involved in melatonin biosynthesis by catalyzing the formation of N-acetylserotonin (NAS) from serotonin and of melatonin (N-acetyl-5-methoxytryptamine) from 5-methoxytryptamine (5-MT). This chain is GCN5-related N-acetyltransferase 1, chloroplastic, found in Arabidopsis thaliana (Mouse-ear cress).